The sequence spans 379 residues: Chaperone protein DnaJ (379 aa).

Positions 5 to 70 constitute a J domain; it reads DYYEILGLDK…QKKAQYDQFG (66 aa). A CR-type zinc finger spans residues 135–217; that stretch reads GVEKEISVTR…CRGKGIVRKH (83 aa). Zn(2+) is bound by residues cysteine 148, cysteine 151, cysteine 165, cysteine 168, cysteine 191, cysteine 194, cysteine 205, and cysteine 208. 4 CXXCXGXG motif repeats span residues 148 to 155, 165 to 172, 191 to 198, and 205 to 212; these read CETCNGTG, CDKCNGTG, CDKCGGRG, and CEECRGKG.

It belongs to the DnaJ family. As to quaternary structure, homodimer. Requires Zn(2+) as cofactor.

It is found in the cytoplasm. Participates actively in the response to hyperosmotic and heat shock by preventing the aggregation of stress-denatured proteins and by disaggregating proteins, also in an autonomous, DnaK-independent fashion. Unfolded proteins bind initially to DnaJ; upon interaction with the DnaJ-bound protein, DnaK hydrolyzes its bound ATP, resulting in the formation of a stable complex. GrpE releases ADP from DnaK; ATP binding to DnaK triggers the release of the substrate protein, thus completing the reaction cycle. Several rounds of ATP-dependent interactions between DnaJ, DnaK and GrpE are required for fully efficient folding. Also involved, together with DnaK and GrpE, in the DNA replication of plasmids through activation of initiation proteins. The polypeptide is Chaperone protein DnaJ (Clostridium kluyveri (strain ATCC 8527 / DSM 555 / NBRC 12016 / NCIMB 10680 / K1)).